We begin with the raw amino-acid sequence, 260 residues long: MSNAADKLVIAGREFSSRLMVGTGKYASNEQMIKALEVSGAEIITVAVRRVNLADRGKGCLLDFIDPKKYTLLPNTAGCYTADDAVRTCRLAREAGMSDLVKLEVLGDEKTLFPDNEELLKAAKILVKEGFTVLPYTSDDPIVCKKLEDIGCAAVMPLGAPIGSGLGIRNPYNILIIKETVKVPVIVDAGVGTASDAAIAMELGIDGVLMNTGIAGARDPIAMAEAMNMAVRAGRLAYLAGRIPKKLYATASSPIEGMIG.

The Schiff-base intermediate with DXP role is filled by lysine 102. 1-deoxy-D-xylulose 5-phosphate contacts are provided by residues glycine 163, 189–190, and 211–212; these read AG and NT.

This sequence belongs to the ThiG family. Homotetramer. Forms heterodimers with either ThiH or ThiS.

The protein localises to the cytoplasm. It carries out the reaction [ThiS sulfur-carrier protein]-C-terminal-Gly-aminoethanethioate + 2-iminoacetate + 1-deoxy-D-xylulose 5-phosphate = [ThiS sulfur-carrier protein]-C-terminal Gly-Gly + 2-[(2R,5Z)-2-carboxy-4-methylthiazol-5(2H)-ylidene]ethyl phosphate + 2 H2O + H(+). It participates in cofactor biosynthesis; thiamine diphosphate biosynthesis. Functionally, catalyzes the rearrangement of 1-deoxy-D-xylulose 5-phosphate (DXP) to produce the thiazole phosphate moiety of thiamine. Sulfur is provided by the thiocarboxylate moiety of the carrier protein ThiS. In vitro, sulfur can be provided by H(2)S. In Geobacter sulfurreducens (strain ATCC 51573 / DSM 12127 / PCA), this protein is Thiazole synthase.